A 129-amino-acid polypeptide reads, in one-letter code: Protein Turandot C (129 aa).

Positions 1 to 21 are cleaved as a signal peptide; that stretch reads MNASISLLCLALLLISPFCLG.

The protein belongs to the Turandot family.

It is found in the secreted. In terms of biological role, a humoral factor that may play a role in stress tolerance. The polypeptide is Protein Turandot C (Drosophila melanogaster (Fruit fly)).